Consider the following 381-residue polypeptide: E3 ubiquitin-protein ligase RNF13 (381 aa).

Residues 1–34 form the signal peptide; it reads MLLSIGMLMLSATQIYTIVTVQLFAFLNLLPVEA. Topologically, residues 35-182 are lumenal; sequence DILAYNFENG…IPEFSLPLEY (148 aa). The region spanning 64–160 is the PA domain; that stretch reads LKGFLINSKP…GEASANSLKE (97 aa). An N-linked (GlcNAc...) asparagine glycan is attached at N88. A helical membrane pass occupies residues 183 to 203; it reads YLIPFLIIVGICLILIVIFMI. At 204 to 381 the chain is on the cytoplasmic side; sequence TKFVQDRHRA…ERDYRVTNTV (178 aa). An RING-type; atypical zinc finger spans residues 240 to 282; the sequence is CAICLDEYEDGDKLRILPCSHAYHCKCVDPWLTKTKKTCPVCK. Residues 285–381 are disordered; that stretch reads VVPSQGDSDS…ERDYRVTNTV (97 aa). Acidic residues-rich tracts occupy residues 292–305 and 339–353; these read SDSETDSSQEENEV and SEYEEDDNDNIDSSD. Positions 370-381 are enriched in basic and acidic residues; that stretch reads NDERDYRVTNTV.

In terms of tissue distribution, widely expressed (at protein level). Lowest levels in the liver, moderate levels in the heart, intestine and spleen, and high levels in skeletal muscle, kidney, proventriculus and brain. Also expressed in inner ear after noise exposure.

The protein resides in the endoplasmic reticulum membrane. It localises to the late endosome membrane. It is found in the lysosome membrane. Its subcellular location is the nucleus inner membrane. The enzyme catalyses S-ubiquitinyl-[E2 ubiquitin-conjugating enzyme]-L-cysteine + [acceptor protein]-L-lysine = [E2 ubiquitin-conjugating enzyme]-L-cysteine + N(6)-ubiquitinyl-[acceptor protein]-L-lysine.. It participates in protein modification; protein ubiquitination. In terms of biological role, E3 ubiquitin-protein ligase that regulates cell proliferation. Involved in apoptosis regulation. Mediates ER stress-induced activation of JNK signaling pathway and apoptosis by promoting ERN1 activation and splicing of XBP1 mRNA. The polypeptide is E3 ubiquitin-protein ligase RNF13 (Gallus gallus (Chicken)).